The chain runs to 206 residues: Accelerated cell death 11 (206 aa).

An N-acylsphingoid base 1-phosphate is bound by residues D60, K64, R99, R103, and H143.

The protein belongs to the GLTP family. Interacts with BPA1, PRA1F2 and PRA1F3.

The protein resides in the cytoplasm. Its function is as follows. Exhibits selective intermembrane transfer of ceramide-1-phosphate (C1P) and phytoceramide-1-phosphate. Does not transport ceramide (Cer) or GalCer, suggesting a requirement for phosphate in the headgroup for functionality. Transports in vitro sphingosine, but not glycosphingolipids. Also has some in vitro activity with sphingomyelin, a lipid not detected in plant tissues. The transport function may be not directly involved in regulating cell death. Rather, perturbations in the function of ACD11 or related components could be monitored by R-proteins, which then mediate defense and programmed cell death (PCD), as proposed in the guard hypothesis. C1P transfer is stimulated by phosphatidylserine in C1P source vesicles. Regulates autophagy, inflammasome mediated IL1B and IL18 processing, and pyroptosis, but not apoptosis. In Arabidopsis thaliana (Mouse-ear cress), this protein is Accelerated cell death 11.